The primary structure comprises 232 residues: E3 ubiquitin-protein ligase RNF125 (232 aa).

Residues 1 to 10 (MGSVLSSDSG) are compositionally biased toward polar residues. Positions 1–27 (MGSVLSSDSGKSAPPSATPRALERRGD) are disordered. Residue Gly-2 is the site of N-myristoyl glycine attachment. Zn(2+) contacts are provided by Cys-37 and Cys-40. The segment at 37-76 (CAVCLEVLHQPVRTRCGHVFCRSCIATSLKNNKWTCPYCR) adopts an RING-type zinc-finger fold. The segment at 43 to 45 (VLH) is interaction with the C2HC RNF-type zinc finger. Positions 52, 54, 57, 60, 72, 75, 100, and 103 each coordinate Zn(2+). A C2HC RNF-type zinc finger spans residues 100–119 (CAECDTLVCLGEMRAHIRTC). The interaction with the RING-type zinc finger stretch occupies residues 109–113 (LGEMR). Zn(2+)-binding residues include His-115 and Cys-119. The linker region stretch occupies residues 120–128 (QKYIDKYGP). The interval 210–224 (EEALIRRVLDRSLLE) is required for interaction with ubiquitin and for autoubiquitination.

Interacts with UBE2D1. Interacts with VCP/p97; leading to recruit RNF125 to RIGI and promote ubiquitination of RIGI. In terms of processing, autoubiquitinated, leading to its subsequent proteasomal degradation.

It localises to the golgi apparatus membrane. It catalyses the reaction S-ubiquitinyl-[E2 ubiquitin-conjugating enzyme]-L-cysteine + [acceptor protein]-L-lysine = [E2 ubiquitin-conjugating enzyme]-L-cysteine + N(6)-ubiquitinyl-[acceptor protein]-L-lysine.. Its pathway is protein modification; protein ubiquitination. In terms of biological role, E3 ubiquitin-protein ligase that mediates ubiquitination and subsequent proteasomal degradation of target proteins, such as RIGI, MAVS/IPS1, IFIH1/MDA5, JAK1 and p53/TP53. Acts as a negative regulator of type I interferon production by mediating ubiquitination of RIGI at 'Lys-181', leading to RIGI degradation. Mediates ubiquitination and subsequent degradation of p53/TP53. Mediates ubiquitination and subsequent degradation of JAK1. Acts as a positive regulator of T-cell activation. The chain is E3 ubiquitin-protein ligase RNF125 (RNF125) from Macaca fascicularis (Crab-eating macaque).